The following is a 120-amino-acid chain: NAD(P)H-quinone oxidoreductase subunit 3, chloroplastic (120 aa).

A run of 3 helical transmembrane segments spans residues 9-29 (IFWA…LISG), 64-84 (MFAL…PWAM), and 88-108 (VLGV…ILGL).

The protein belongs to the complex I subunit 3 family. In terms of assembly, NDH is composed of at least 16 different subunits, 5 of which are encoded in the nucleus.

The protein localises to the plastid. Its subcellular location is the chloroplast thylakoid membrane. The enzyme catalyses a plastoquinone + NADH + (n+1) H(+)(in) = a plastoquinol + NAD(+) + n H(+)(out). It catalyses the reaction a plastoquinone + NADPH + (n+1) H(+)(in) = a plastoquinol + NADP(+) + n H(+)(out). Functionally, NDH shuttles electrons from NAD(P)H:plastoquinone, via FMN and iron-sulfur (Fe-S) centers, to quinones in the photosynthetic chain and possibly in a chloroplast respiratory chain. The immediate electron acceptor for the enzyme in this species is believed to be plastoquinone. Couples the redox reaction to proton translocation, and thus conserves the redox energy in a proton gradient. The protein is NAD(P)H-quinone oxidoreductase subunit 3, chloroplastic of Olimarabidopsis pumila (Dwarf rocket).